A 47-amino-acid polypeptide reads, in one-letter code: MQVLSSLRSAKNRHKDCIVVRRRGRVYVICKSNPRFKAVQGGKKKKG.

The protein belongs to the bacterial ribosomal protein bL36 family.

The polypeptide is Large ribosomal subunit protein bL36B (Pectobacterium atrosepticum (strain SCRI 1043 / ATCC BAA-672) (Erwinia carotovora subsp. atroseptica)).